Here is a 67-residue protein sequence, read N- to C-terminus: Large ribosomal subunit protein bL35 (67 aa).

This sequence belongs to the bacterial ribosomal protein bL35 family.

The protein is Large ribosomal subunit protein bL35 of Rickettsia prowazekii (strain Madrid E).